The primary structure comprises 346 residues: Cell division protein ZipA (346 aa).

Residues 1-6 are Periplasmic-facing; it reads MEDLQL. Residues 7 to 27 traverse the membrane as a helical segment; sequence VLFVLGAIAIVAVLVHGFWSI. Residues 28–346 lie on the Cytoplasmic side of the membrane; that stretch reads RRQQPKSLKD…DYLHRIRANA (319 aa). 2 disordered regions span residues 76 to 103 and 121 to 145; these read ANEA…QPVE and QPDF…RQEP.

The protein belongs to the ZipA family. As to quaternary structure, interacts with FtsZ via their C-terminal domains.

Its subcellular location is the cell inner membrane. Its function is as follows. Essential cell division protein that stabilizes the FtsZ protofilaments by cross-linking them and that serves as a cytoplasmic membrane anchor for the Z ring. Also required for the recruitment to the septal ring of downstream cell division proteins. In Shewanella sp. (strain MR-7), this protein is Cell division protein ZipA.